A 67-amino-acid chain; its full sequence is Conotoxin Im3.1 (67 aa).

The N-terminal stretch at 1 to 20 (MMSTLVVLLTICLLMLPLTA) is a signal peptide. The propeptide occupies 21-52 (RQLDADQLADQLAERMEDISADQNRWFDPVKR). Disulfide bonds link C53–C63, C54–C61, and C59–C64.

It belongs to the conotoxin M superfamily. Expressed by the venom duct.

It is found in the secreted. Probable neurotoxin. The polypeptide is Conotoxin Im3.1 (Conus imperialis (Imperial cone)).